The sequence spans 877 residues: Leucine--tRNA ligase (877 aa).

The 'HIGH' region signature appears at P48–H58. Residues K636–S640 carry the 'KMSKS' region motif. K639 contributes to the ATP binding site.

Belongs to the class-I aminoacyl-tRNA synthetase family.

The protein localises to the cytoplasm. It carries out the reaction tRNA(Leu) + L-leucine + ATP = L-leucyl-tRNA(Leu) + AMP + diphosphate. In Ralstonia nicotianae (strain ATCC BAA-1114 / GMI1000) (Ralstonia solanacearum), this protein is Leucine--tRNA ligase.